A 196-amino-acid polypeptide reads, in one-letter code: Interleukin-23 subunit alpha (196 aa).

A signal peptide spans 1–21; that stretch reads MLDCRAIILLWLLPWATQGLA.

This sequence belongs to the IL-6 superfamily. As to quaternary structure, heterodimer with IL12B; disulfide-linked. The heterodimer is known as interleukin IL-23. Interacts with IL23R; this interaction enables recruitment of IL12RB1.

It is found in the secreted. In terms of biological role, associates with IL12B to form the pro-inflammatory cytokine IL-23 that plays different roles in innate and adaptive immunity. Released by antigen-presenting cells such as dendritic cells or macrophages, binds to a heterodimeric receptor complex composed of IL12RB1 and IL23R to activate JAK2 and TYK2 which then phosphorylate the receptor to form a docking site leading to the phosphorylation of STAT3 and STAT4. This process leads to activation of several pathways including p38 MAPK or NF-kappa-B and promotes the production of pro-inflammatory cytokines such as interleukin-17A/IL17A. In turn, participates in the early and effective intracellular bacterial clearance. Promotes the expansion and survival of T-helper 17 cells, a CD4-positive helper T-cell subset that produces IL-17, as well as other IL-17-producing cells. This is Interleukin-23 subunit alpha (Il23a) from Rattus norvegicus (Rat).